Reading from the N-terminus, the 218-residue chain is MTNSSPVYDWFQERLEIQAIADDVSSKYVPPHVNIFYCLGGITLVCFLVQFATGFAMTFYYKPTVTEAYSSVSYLMSDVSFGWLIRSVHRWSASMMVLMLILHVFRVYLTGGFKRPRELTWVTGVVMAVITVSFGVTGYSLPWDQVGYWAVKIVSGVPAAIPVVGDFMVELLRGGESVGQSTLTRFYSLHTFVLPWLLAVFMLMHFLMIRKQGISGPL.

Residues 35 to 55 (IFYCLGGITLVCFLVQFATGF) traverse the membrane as a helical segment. Heme c is bound at residue Cys38. His89 and His103 together coordinate heme b. 3 helical membrane-spanning segments follow: residues 93–113 (ASMM…TGGF), 119–139 (LTWV…VTGY), and 189–209 (LHTF…FLMI). His190 and His205 together coordinate heme b.

It belongs to the cytochrome b family. PetB subfamily. The 4 large subunits of the cytochrome b6-f complex are cytochrome b6, subunit IV (17 kDa polypeptide, PetD), cytochrome f and the Rieske protein, while the 4 small subunits are PetG, PetL, PetM and PetN. The complex functions as a dimer. Heme b serves as cofactor. Requires heme c as cofactor.

The protein resides in the cellular thylakoid membrane. In terms of biological role, component of the cytochrome b6-f complex, which mediates electron transfer between photosystem II (PSII) and photosystem I (PSI), cyclic electron flow around PSI, and state transitions. This chain is Cytochrome b6, found in Prochlorococcus marinus (strain MIT 9303).